Here is a 141-residue protein sequence, read N- to C-terminus: Hemoglobin subunit alpha (141 aa).

The Globin domain occupies 1–141; it reads VLSANDKANV…VSTVLTSKYR (141 aa). Phosphoserine is present on Ser3. N6-succinyllysine occurs at positions 7 and 11. Lys16 is subject to N6-acetyllysine; alternate. Residue Lys16 is modified to N6-succinyllysine; alternate. Tyr24 bears the Phosphotyrosine mark. At Ser35 the chain carries Phosphoserine. Lys40 carries the N6-succinyllysine modification. The residue at position 49 (Ser49) is a Phosphoserine. His58 serves as a coordination point for O2. Heme b is bound at residue His87. Ser102 bears the Phosphoserine mark. Residue Thr108 is modified to Phosphothreonine. Phosphoserine is present on residues Ser124 and Ser131. 2 positions are modified to phosphothreonine: Thr134 and Thr137. Phosphoserine is present on Ser138.

It belongs to the globin family. As to quaternary structure, heterotetramer of two alpha chains and two beta chains. Red blood cells.

Its function is as follows. Involved in oxygen transport from the lung to the various peripheral tissues. Hemopressin acts as an antagonist peptide of the cannabinoid receptor CNR1. Hemopressin-binding efficiently blocks cannabinoid receptor CNR1 and subsequent signaling. This chain is Hemoglobin subunit alpha (HBA), found in Suncus murinus (Asian house shrew).